A 166-amino-acid polypeptide reads, in one-letter code: Disulfide bond formation protein B (166 aa).

Over M1–T12 the chain is Cytoplasmic. A helical membrane pass occupies residues A13 to Y29. The Periplasmic portion of the chain corresponds to M30–I47. Residues C39 and C42 are joined by a disulfide bond. A helical transmembrane segment spans residues F48–P64. The Cytoplasmic portion of the chain corresponds to A65–K70. Residues V71 to A88 form a helical membrane-spanning segment. The Periplasmic portion of the chain corresponds to R89–G145. A disulfide bridge links C104 with C131. Residues W146–R164 traverse the membrane as a helical segment. At K165–A166 the chain is on the cytoplasmic side.

The protein belongs to the DsbB family.

It is found in the cell inner membrane. Required for disulfide bond formation in some periplasmic proteins. Acts by oxidizing the DsbA protein. This Saccharophagus degradans (strain 2-40 / ATCC 43961 / DSM 17024) protein is Disulfide bond formation protein B.